Consider the following 302-residue polypeptide: UDP-N-acetylenolpyruvoylglucosamine reductase (302 aa).

Positions 31-210 (IGGQTKVYFR…ENEVLELKKK (180 aa)) constitute an FAD-binding PCMH-type domain. Arg175 is an active-site residue. Ser224 (proton donor) is an active-site residue. Glu297 is an active-site residue.

The protein belongs to the MurB family. Requires FAD as cofactor.

Its subcellular location is the cytoplasm. The catalysed reaction is UDP-N-acetyl-alpha-D-muramate + NADP(+) = UDP-N-acetyl-3-O-(1-carboxyvinyl)-alpha-D-glucosamine + NADPH + H(+). The protein operates within cell wall biogenesis; peptidoglycan biosynthesis. In terms of biological role, cell wall formation. In Pelagibacter ubique (strain HTCC1062), this protein is UDP-N-acetylenolpyruvoylglucosamine reductase.